The chain runs to 351 residues: S-adenosylmethionine:tRNA ribosyltransferase-isomerase (351 aa).

Belongs to the QueA family. Monomer.

It is found in the cytoplasm. The catalysed reaction is 7-aminomethyl-7-carbaguanosine(34) in tRNA + S-adenosyl-L-methionine = epoxyqueuosine(34) in tRNA + adenine + L-methionine + 2 H(+). It functions in the pathway tRNA modification; tRNA-queuosine biosynthesis. Transfers and isomerizes the ribose moiety from AdoMet to the 7-aminomethyl group of 7-deazaguanine (preQ1-tRNA) to give epoxyqueuosine (oQ-tRNA). The polypeptide is S-adenosylmethionine:tRNA ribosyltransferase-isomerase (Hahella chejuensis (strain KCTC 2396)).